The primary structure comprises 341 residues: Elongation factor Ts (341 aa).

The segment at 80 to 83 (TDFV) is involved in Mg(2+) ion dislocation from EF-Tu.

This sequence belongs to the EF-Ts family.

It is found in the cytoplasm. Functionally, associates with the EF-Tu.GDP complex and induces the exchange of GDP to GTP. It remains bound to the aminoacyl-tRNA.EF-Tu.GTP complex up to the GTP hydrolysis stage on the ribosome. This is Elongation factor Ts from Lactobacillus johnsonii (strain CNCM I-12250 / La1 / NCC 533).